A 103-amino-acid polypeptide reads, in one-letter code: Thrombin inhibitor rhodniin (103 aa).

2 consecutive Kazal-like domains span residues 1–50 (EGGE…PCEP) and 51–103 (DEDE…PCRT). 6 cysteine pairs are disulfide-bonded: Cys-6/Cys-31, Cys-8/Cys-27, Cys-16/Cys-48, Cys-57/Cys-84, Cys-60/Cys-80, and Cys-69/Cys-101.

It localises to the secreted. Functionally, thrombin-specific inhibitor. Appears to form 1:1 complexes with thrombin. Prevents blood clotting to allow the insect to feed on blood. The polypeptide is Thrombin inhibitor rhodniin (Rhodnius prolixus (Triatomid bug)).